The primary structure comprises 489 residues: NADH-quinone oxidoreductase subunit N (489 aa).

A run of 14 helical transmembrane segments spans residues 8 to 28 (LIAM…MLSI), 35 to 55 (FTIA…LYYV), 75 to 95 (FFTA…YPWL), 105 to 125 (FYML…AHHL), 127 to 147 (SMFI…GYAF), 159 to 179 (YMLL…LLYA), 203 to 223 (VLAG…LFPF), 235 to 255 (PAPT…AVVM), 271 to 291 (MILG…ALTQ), 303 to 323 (VSHL…PILA), 329 to 349 (IYLA…AVAS), 374 to 394 (AVVM…LGFI), 407 to 427 (SLWW…FYYL), and 456 to 476 (LITL…QPLI).

This sequence belongs to the complex I subunit 2 family. As to quaternary structure, NDH-1 is composed of 13 different subunits. Subunits NuoA, H, J, K, L, M, N constitute the membrane sector of the complex.

The protein resides in the cell inner membrane. It carries out the reaction a quinone + NADH + 5 H(+)(in) = a quinol + NAD(+) + 4 H(+)(out). Functionally, NDH-1 shuttles electrons from NADH, via FMN and iron-sulfur (Fe-S) centers, to quinones in the respiratory chain. The immediate electron acceptor for the enzyme in this species is believed to be ubiquinone. Couples the redox reaction to proton translocation (for every two electrons transferred, four hydrogen ions are translocated across the cytoplasmic membrane), and thus conserves the redox energy in a proton gradient. This is NADH-quinone oxidoreductase subunit N from Proteus mirabilis (strain HI4320).